We begin with the raw amino-acid sequence, 225 residues long: Superantigen-like protein 11 (225 aa).

The signal sequence occupies residues 1 to 30 (MKLKNIAKASLALGILTTGMITTTAQPVKA). Residues 94-196 (VDIFVVRENS…RITMKDGGFY (103 aa)) are sialyl Lewis X-binding.

The protein belongs to the staphylococcal/streptococcal toxin family. Homodimer (via its C-terminal domain). Interacts with host FCAR and SELPLG (via sialyl Lewis X).

The protein localises to the secreted. Secreted protein that plays a role in the inhibition of host immune system. Targets myeloid cells such as monocytes or granulocytes through binding with sialyllactosamine-containing glycoproteins. Prevents initial rolling of neutrophils toward the site of infection by interacting with host SELPLG. Disrupts neutrophil motility by induction of cell adhesion via interacting with glycans but independently of SELPLG. This Staphylococcus aureus (strain Newman) protein is Superantigen-like protein 11.